An 865-amino-acid chain; its full sequence is SWI/SNF chromatin-remodeling complex subunit sol1 (865 aa).

Disordered stretches follow at residues 1–34 (MNNQ…QPAY), 54–92 (MMNT…ASNG), 116–143 (QEKE…QSRE), and 163–183 (VRQT…ANQL). Positions 17–30 (SYPTQGQSYNTQEE) are enriched in polar residues. Positions 121 to 139 (AMQQQQQQQQQQQLYQRQM) are enriched in low complexity. Residues 188–278 (AASFDKFMVS…YLLPYEEAWL (91 aa)) enclose the ARID domain. Residues 288–380 (QQAKANHSAN…QTSSSAAPVD (93 aa)) form a disordered region. Over residues 328–353 (HSKSPSPAFTANRFSPAAPTTVSSER) the composition is skewed to polar residues. Over residues 356-368 (PPYPSAPTRPTPP) the composition is skewed to pro residues. 2 positions are modified to phosphoserine: S852 and S855.

It belongs to the SWI1 family. In terms of assembly, component of the SWI/SNF global transcription activator complex composed of at least arp9, arp42, snf5, snf22, snf30, sbf59, sol1, ssr1, ssr2, ssr3, ssr4 and tfg3.

The protein resides in the nucleus. In terms of biological role, component of the SWI/SNF complex, an ATP-dependent chromatin remodeling complex, required for the positive and negative regulation of gene expression of a large number of genes. It changes chromatin structure by altering DNA-histone contacts within a nucleosome, leading eventually to a change in nucleosome position, thus facilitating or repressing binding of gene-specific transcription factors. The polypeptide is SWI/SNF chromatin-remodeling complex subunit sol1 (sol1) (Schizosaccharomyces pombe (strain 972 / ATCC 24843) (Fission yeast)).